The primary structure comprises 1274 residues: Myosin-1 (1274 aa).

Residues 1-28 (MAPSKKAGKKGAVGGFLSGASKPQKVQK) are disordered. One can recognise a Myosin motor domain in the interval 41–721 (AGVPDMTLLS…TLFYLEGERD (681 aa)). ATP is bound at residue 134-141 (GESGAGKT). Position 363 is a phosphoserine (Ser363). An actin-binding region spans residues 410–492 (VIGVLDIYGF…AGIFATLNDA (83 aa)). 2 IQ domains span residues 725-745 (HTMA…KHEA) and 746-771 (ATKI…YGHQ). One can recognise a TH1 domain in the interval 779–969 (RRRFSLLGMR…TIQVGSGEPP (191 aa)). 3 disordered regions span residues 951-1029 (RGDA…PVVT), 1042-1071 (ARAP…PKEF), and 1116-1248 (PSNY…QVAQ). Residues 957–974 (KSHTIQVGSGEPPNSLSN) are compositionally biased toward polar residues. Positions 1042-1053 (ARAPPSIPGRAA) are enriched in low complexity. Pro residues-rich tracts occupy residues 1054 to 1067 (APPP…PAGP) and 1126 to 1138 (APPP…PPSR). In terms of domain architecture, SH3 spans 1067 to 1125 (PPKEFYKALYNFTGQEGEMNLVKGEEVEVKEKDDNGWWMVVKNGQEGWAPSNYLKKVEQ). Composition is skewed to low complexity over residues 1139-1157 (PVAA…PAVT) and 1170-1226 (AASA…IGGK).

Belongs to the TRAFAC class myosin-kinesin ATPase superfamily. Myosin family. Phosphorylation of the TEDS site (Ser-363) is required for the polarization of the actin cytoskeleton. Phosphorylation probably activates the myosin-I ATPase activity.

It is found in the cytoplasm. The protein resides in the cytoskeleton. The protein localises to the actin patch. Type-I myosin implicated in the organization of the actin cytoskeleton. Required for proper actin cytoskeleton polarization. At the cell cortex, assembles in patch-like structures together with proteins from the actin-polymerizing machinery and promotes actin assembly. Functions as actin nucleation-promoting factor (NPF) for the Arp2/3 complex. The sequence is that of Myosin-1 (MYO1) from Cryptococcus neoformans var. neoformans serotype D (strain B-3501A) (Filobasidiella neoformans).